Here is a 555-residue protein sequence, read N- to C-terminus: Adenine deaminase (555 aa).

It belongs to the metallo-dependent hydrolases superfamily. Adenine deaminase family. Mn(2+) serves as cofactor.

It carries out the reaction adenine + H2O + H(+) = hypoxanthine + NH4(+). This is Adenine deaminase from Methanosarcina mazei (strain ATCC BAA-159 / DSM 3647 / Goe1 / Go1 / JCM 11833 / OCM 88) (Methanosarcina frisia).